A 67-amino-acid polypeptide reads, in one-letter code: Conotoxin Cl6.8 (67 aa).

The signal sequence occupies residues 1 to 22 (MKVTAVLMVAVLVLTACQLTTA). The propeptide occupies 23–39 (NTTDYVRRILARKSTMS). 3 disulfide bridges follow: C43–C58, C50–C62, and C57–C66. C66 is subject to Cysteine amide.

Belongs to the conotoxin O1 superfamily. As to expression, expressed by the venom duct.

Its subcellular location is the secreted. This is Conotoxin Cl6.8 from Californiconus californicus (California cone).